We begin with the raw amino-acid sequence, 481 residues long: Transmembrane protein 39A (481 aa).

8 helical membrane passes run 74-94, 109-129, 150-170, 182-202, 278-298, 313-333, 411-431, and 437-457; these read LFETLLLLYLLVALLVQYINI, STSLNFHLMDAHLAVFIAVML, LCYVLLLVVRVCVLTLCGWVL, SVLKLLFLGYPFGVYVPLCCL, EVLFNSLLSAYYVAFLPLCFV, LIMVWINAFVMLMSHLLPPHY, LLNVLIGIECSVVVYQLYSLL, and NHTLSLGLILVCNYYVLFKLL.

This sequence belongs to the TMEM39 family.

It is found in the endoplasmic reticulum membrane. In terms of biological role, regulates autophagy by controlling the spatial distribution and levels of the intracellular phosphatidylinositol 4-phosphate (PtdIns(4)P) pools. Modulates (PtdIns(4)P) levels by regulating the ER-to-Golgi trafficking of the phosphatidylinositide phosphatase SACM1L. This chain is Transmembrane protein 39A (tmem39a), found in Danio rerio (Zebrafish).